Consider the following 415-residue polypeptide: Gamma-glutamyl phosphate reductase (415 aa).

This sequence belongs to the gamma-glutamyl phosphate reductase family.

Its subcellular location is the cytoplasm. The enzyme catalyses L-glutamate 5-semialdehyde + phosphate + NADP(+) = L-glutamyl 5-phosphate + NADPH + H(+). Its pathway is amino-acid biosynthesis; L-proline biosynthesis; L-glutamate 5-semialdehyde from L-glutamate: step 2/2. Functionally, catalyzes the NADPH-dependent reduction of L-glutamate 5-phosphate into L-glutamate 5-semialdehyde and phosphate. The product spontaneously undergoes cyclization to form 1-pyrroline-5-carboxylate. This Leuconostoc citreum (strain KM20) protein is Gamma-glutamyl phosphate reductase.